A 176-amino-acid chain; its full sequence is Magnetosome protein MamT (176 aa).

The Cytoplasmic portion of the chain corresponds to M1–R11. Residues W12–W30 form a helical membrane-spanning segment. Topologically, residues D31–L176 are lumenal. The MCR (magnetochrome) 1 motif lies at V89–M109. 6 residues coordinate heme: C103, C106, H107, C154, C157, and H158. Positions I140 to I160 match the MCR 2 motif.

It belongs to the magnetosome MamT family. It depends on heme as a cofactor.

It is found in the magnetosome membrane. Functionally, may play a role in magnetite crystal maturation. May transfer electrons to balance the Fe(2+)-Fe(3+) ratio during magnetite formation. In Paramagnetospirillum magneticum (strain ATCC 700264 / AMB-1) (Magnetospirillum magneticum), this protein is Magnetosome protein MamT (mamT).